Consider the following 143-residue polypeptide: Transcriptional regulator SlyA (143 aa).

One can recognise an HTH marR-type domain in the interval 2–135; sequence ESTLGSDLAR…LSGLIDKLEK (134 aa). The H-T-H motif DNA-binding region spans 49 to 72; that stretch reads QIQLAKAIGIEQPSLVRTLDQLEE.

It belongs to the SlyA family. Homodimer.

Functionally, transcription regulator that can specifically activate or repress expression of target genes. This is Transcriptional regulator SlyA from Yersinia pestis (strain Pestoides F).